We begin with the raw amino-acid sequence, 173 residues long: Crossover junction endodeoxyribonuclease RuvC (173 aa).

Catalysis depends on residues aspartate 8, glutamate 69, and aspartate 141. Residues aspartate 8, glutamate 69, and aspartate 141 each coordinate Mg(2+).

Belongs to the RuvC family. Homodimer which binds Holliday junction (HJ) DNA. The HJ becomes 2-fold symmetrical on binding to RuvC with unstacked arms; it has a different conformation from HJ DNA in complex with RuvA. In the full resolvosome a probable DNA-RuvA(4)-RuvB(12)-RuvC(2) complex forms which resolves the HJ. Mg(2+) serves as cofactor.

It localises to the cytoplasm. It catalyses the reaction Endonucleolytic cleavage at a junction such as a reciprocal single-stranded crossover between two homologous DNA duplexes (Holliday junction).. Its function is as follows. The RuvA-RuvB-RuvC complex processes Holliday junction (HJ) DNA during genetic recombination and DNA repair. Endonuclease that resolves HJ intermediates. Cleaves cruciform DNA by making single-stranded nicks across the HJ at symmetrical positions within the homologous arms, yielding a 5'-phosphate and a 3'-hydroxyl group; requires a central core of homology in the junction. The consensus cleavage sequence is 5'-(A/T)TT(C/G)-3'. Cleavage occurs on the 3'-side of the TT dinucleotide at the point of strand exchange. HJ branch migration catalyzed by RuvA-RuvB allows RuvC to scan DNA until it finds its consensus sequence, where it cleaves and resolves the cruciform DNA. This chain is Crossover junction endodeoxyribonuclease RuvC, found in Xylella fastidiosa (strain 9a5c).